We begin with the raw amino-acid sequence, 466 residues long: Fumarate hydratase class II (466 aa).

Residues 99 to 101 (SGT), 129 to 132 (HPND), 139 to 141 (SSN), and threonine 187 contribute to the substrate site. Histidine 188 acts as the Proton donor/acceptor in catalysis. The active site involves serine 318. Substrate contacts are provided by residues serine 319 and 324–326 (KVN).

This sequence belongs to the class-II fumarase/aspartase family. Fumarase subfamily. Homotetramer.

It localises to the cytoplasm. The enzyme catalyses (S)-malate = fumarate + H2O. It participates in carbohydrate metabolism; tricarboxylic acid cycle; (S)-malate from fumarate: step 1/1. Involved in the TCA cycle. Catalyzes the stereospecific interconversion of fumarate to L-malate. This is Fumarate hydratase class II from Thermus thermophilus (strain ATCC BAA-163 / DSM 7039 / HB27).